Reading from the N-terminus, the 33-residue chain is Gastrin (33 aa).

A Pyrrolidone carboxylic acid modification is found at Gln1. Phe33 carries the phenylalanine amide modification.

It belongs to the gastrin/cholecystokinin family.

It is found in the secreted. Its function is as follows. Gastrin stimulates the stomach mucosa to produce and secrete hydrochloric acid and the pancreas to secrete its digestive enzymes. It also stimulates smooth muscle contraction and increases blood circulation and water secretion in the stomach and intestine. In Cavia porcellus (Guinea pig), this protein is Gastrin (GAST).